The chain runs to 467 residues: MTTGKIVQIIGAVVDVEFPQGSVPRVYDALNVVDAKERLVLEVQQQIGGGVVRAIVMGSSDGLRRGLTVENTGAPITVPVGTKTLGRIMNVLGDAIDECGEIGAEEHYSIHRAAPSYEEQANSTELLETGVKVIDLICPFAKGGKIGLFGGAGVGKTVNMMELINNIALQHSGLSVFAGVGERTREGNDFYFEMQEAGVVNIEHPEESKVAMVYGQMNEPPGNRLRVALTGLTMAERFRDEGRDVLLFIDNIYRYTLAGTEVSALLGRMPSAVGYQPTLAEEMGVLQERITSTRSGSITSVQAVYVPADDLTDPSPATTFAHLDATVVLNRNIASMGLYPAIDPLDSTSRQLDPLVVGQEHYDIARNVQSTLQRYKELKDIIAILGMDELSEEDKQVVSRARKIEKFLTQPYHVAEVFTGDPGIYVSLKDTLAGFKGLLAGDYDDVPEQAFMYCGRIEDALENAKKL.

Residue 150-157 (GGAGVGKT) coordinates ATP.

The protein belongs to the ATPase alpha/beta chains family. F-type ATPases have 2 components, CF(1) - the catalytic core - and CF(0) - the membrane proton channel. CF(1) has five subunits: alpha(3), beta(3), gamma(1), delta(1), epsilon(1). CF(0) has three main subunits: a(1), b(2) and c(9-12). The alpha and beta chains form an alternating ring which encloses part of the gamma chain. CF(1) is attached to CF(0) by a central stalk formed by the gamma and epsilon chains, while a peripheral stalk is formed by the delta and b chains.

The protein resides in the cell inner membrane. The enzyme catalyses ATP + H2O + 4 H(+)(in) = ADP + phosphate + 5 H(+)(out). Produces ATP from ADP in the presence of a proton gradient across the membrane. The catalytic sites are hosted primarily by the beta subunits. The polypeptide is ATP synthase subunit beta (Aliivibrio salmonicida (strain LFI1238) (Vibrio salmonicida (strain LFI1238))).